Reading from the N-terminus, the 156-residue chain is Oxidized purine nucleoside triphosphate hydrolase (156 aa).

One can recognise a Nudix hydrolase domain in the interval 3–132 (ASRLYTLVLV…WFPLLLQKKK (130 aa)). A 2-oxo-dATP-binding site is contributed by Thr8. Residues Thr8 and Lys23 each coordinate 8-oxo-dGMP. Positions 8 and 23 each coordinate 8-oxo-dGTP. Residues Thr8 and Lys23 each contribute to the N(6)-methyl-AMP site. Residues Thr8 and Lys23 each coordinate O(6)-methyl-dGMP. Phe27 serves as a coordination point for 8-oxo-ATP. 2-oxo-dATP contacts are provided by residues Asn33 and 35–38 (FGGK). Asn33 provides a ligand contact to 8-oxo-dGMP. 8-oxo-dGTP-binding positions include Asn33 and 35 to 38 (FGGK). Position 33 (Asn33) interacts with O(6)-methyl-dGMP. 8-oxo-ATP-binding positions include 35–38 (FGGK) and Glu52. Gly36, Glu52, Glu55, Glu56, and Glu100 together coordinate Mg(2+). The short motif at 37 to 58 (GKVQEGETIEDGARRELQEESG) is the Nudix box element. Glu56 lines the 8-oxo-ATP pocket. 2-oxo-dATP is bound at residue 117–120 (WPDD). 117-120 (WPDD) serves as a coordination point for 8-oxo-dGMP. 8-oxo-dGTP is bound at residue 117–120 (WPDD). Position 117–120 (117–120 (WPDD)) interacts with N(6)-methyl-AMP. 117-120 (WPDD) is a binding site for O(6)-methyl-dGMP. 117 to 120 (WPDD) is a binding site for 8-oxo-ATP.

Belongs to the Nudix hydrolase family. In terms of assembly, monomer. Mg(2+) is required as a cofactor. The N-terminus is blocked. Widely expressed with highest expression in thymus, testis, embryo and proliferating blood lymphocytes.

It is found in the cytoplasm. It localises to the cytosol. The protein resides in the mitochondrion matrix. The protein localises to the nucleus. It catalyses the reaction 2-oxo-dATP + H2O = 2-oxo-dAMP + diphosphate + H(+). The enzyme catalyses 2-oxo-ATP + H2O = 2-oxo-AMP + diphosphate + H(+). The catalysed reaction is 8-oxo-dGTP + H2O = 8-oxo-dGMP + diphosphate + H(+). It carries out the reaction 8-oxo-dATP + H2O = 8-oxo-dAMP + diphosphate + H(+). It catalyses the reaction O(6)-methyl-dGTP + H2O = O(6)-methyl-dGMP + diphosphate + H(+). The enzyme catalyses N(6)-methyl-dATP + H2O = N(6)-methyl-dAMP + diphosphate + H(+). The catalysed reaction is N(6)-methyl-ATP + H2O = N(6)-methyl-AMP + diphosphate + H(+). With respect to regulation, inhibited by 2-oxo-dADP and 8-oxo-dGDP. Its function is as follows. Oxidized purine nucleoside triphosphate hydrolase which is a prominent sanitizer of the oxidized nucleotide pool. Catalyzes the hydrolysis of 2-oxo-dATP (2-hydroxy-dATP) into 2-oxo-dAMP. Also has a significant hydrolase activity toward 2-oxo-ATP, 8-oxo-dGTP and 8-oxo-dATP. Through the hydrolysis of oxidized purine nucleoside triphosphates, prevents their incorporation into DNA and the subsequent transversions A:T to C:G and G:C to T:A. Also catalyzes the hydrolysis of methylated purine nucleoside triphosphate preventing their integration into DNA. Through this antimutagenic activity protects cells from oxidative stress. This Homo sapiens (Human) protein is Oxidized purine nucleoside triphosphate hydrolase (NUDT1).